Consider the following 428-residue polypeptide: Adenylosuccinate synthetase (428 aa).

Residues glycine 12–lysine 18 and glycine 40–threonine 42 each bind GTP. The Proton acceptor role is filled by aspartate 13. 2 residues coordinate Mg(2+): aspartate 13 and glycine 40. IMP is bound by residues aspartate 13–lysine 16, asparagine 38–histidine 41, threonine 130, arginine 144, glutamine 225, threonine 240, and arginine 304. The active-site Proton donor is histidine 41. Valine 300–arginine 306 provides a ligand contact to substrate. GTP-binding positions include arginine 306, lysine 332–aspartate 334, and serine 414–glycine 416.

Belongs to the adenylosuccinate synthetase family. As to quaternary structure, homodimer. It depends on Mg(2+) as a cofactor.

Its subcellular location is the cytoplasm. The enzyme catalyses IMP + L-aspartate + GTP = N(6)-(1,2-dicarboxyethyl)-AMP + GDP + phosphate + 2 H(+). It participates in purine metabolism; AMP biosynthesis via de novo pathway; AMP from IMP: step 1/2. In terms of biological role, plays an important role in the de novo pathway of purine nucleotide biosynthesis. Catalyzes the first committed step in the biosynthesis of AMP from IMP. This chain is Adenylosuccinate synthetase, found in Clostridium botulinum (strain ATCC 19397 / Type A).